We begin with the raw amino-acid sequence, 430 residues long: Putative glycylpeptide N-tetradecanoyltransferase 2 (430 aa).

Tetradecanoyl-CoA-binding positions include 47–50, 181–183, and 189–193; these read HKFW, LCV, and SKGLA. Leucine 430 functions as the Proton acceptor; via carboxylate in the catalytic mechanism.

This sequence belongs to the NMT family.

The catalysed reaction is N-terminal glycyl-[protein] + tetradecanoyl-CoA = N-tetradecanoylglycyl-[protein] + CoA + H(+). In terms of biological role, may add a myristoyl group to the N-terminal glycine residue of certain cellular proteins. The sequence is that of Putative glycylpeptide N-tetradecanoyltransferase 2 (NMT2) from Arabidopsis thaliana (Mouse-ear cress).